The primary structure comprises 1132 residues: Tyrosine-protein kinase JAK2 (1132 aa).

The interaction with cytokine/interferon/growth hormone receptors stretch occupies residues 1–239; it reads MGMACLTMTE…RYRFRRFIQQ (239 aa). The region spanning 37-380 is the FERM domain; sequence PVLQVYLYHS…GYYRLTADAH (344 aa). A Phosphotyrosine; by autocatalysis modification is found at Tyr119. Tyr372 and Tyr373 each carry phosphotyrosine. The region spanning 401 to 482 is the SH2; atypical domain; it reads HGPISMDFAI…SLKDLLNCYQ (82 aa). Ser523 is modified (phosphoserine). The 265-residue stretch at 545–809 folds into the Protein kinase 1 domain; sequence LIFNESLGQG…AVIRDLNSLF (265 aa). Phosphotyrosine is present on residues Tyr570 and Tyr813. In terms of domain architecture, Protein kinase 2 spans 849–1126; that stretch reads LKFLQQLGKG…RDLSLRVDQI (278 aa). 855 to 863 is an ATP binding site; it reads LGKGNFGSV. Position 868 is a phosphotyrosine; by autocatalysis (Tyr868). ATP is bound at residue Lys882. 2 positions are modified to phosphotyrosine; by autocatalysis: Tyr966 and Tyr972. Catalysis depends on Asp976, which acts as the Proton acceptor. A phosphotyrosine; by autocatalysis mark is found at Tyr1007 and Tyr1008.

Belongs to the protein kinase superfamily. Tyr protein kinase family. JAK subfamily. In terms of assembly, interacts with IL23R, SKB1 and STAM2. Interacts with EPOR. Interacts with LYN. Interacts with SIRPA. Interacts with SH2B1. Interacts with TEC. Interacts with IFNGR2 (via intracellular domain). Interacts with LEPR (Isoform B). Interacts with HSP90AB1; promotes functional activation in a heat shock-dependent manner. Interacts with STRA6. Interacts with ASB2; the interaction targets JAK2 for Notch-induced proteasomal degradation. Requires Mg(2+) as cofactor. In terms of processing, autophosphorylated, leading to regulate its activity. Leptin promotes phosphorylation on tyrosine residues, including phosphorylation on Tyr-813. Autophosphorylation on Tyr-119 in response to EPO down-regulates its kinase activity. Autophosphorylation on Tyr-868, Tyr-966 and Tyr-972 in response to growth hormone (GH) are required for maximal kinase activity. Also phosphorylated by TEC. Phosphorylated on tyrosine residues in response to interferon gamma signaling. Phosphorylated on tyrosine residues in response to a signaling cascade that is activated by increased cellular retinol. Post-translationally, undergoes Notch-induced ubiquitination and subsequent proteasomal degradation which is mediated by ASB1 or ASB2, the substrate-recognition components of probable ECS E3 ubiquitin-protein ligase complexes. Ubiquitously expressed throughout most tissues.

The protein resides in the endomembrane system. Its subcellular location is the cytoplasm. It localises to the nucleus. The catalysed reaction is L-tyrosyl-[protein] + ATP = O-phospho-L-tyrosyl-[protein] + ADP + H(+). With respect to regulation, regulated by autophosphorylation, can both activate or decrease activity. Heme regulates its activity by enhancing the phosphorylation on Tyr-1007 and Tyr-1008. Its function is as follows. Non-receptor tyrosine kinase involved in various processes such as cell growth, development, differentiation or histone modifications. Mediates essential signaling events in both innate and adaptive immunity. In the cytoplasm, plays a pivotal role in signal transduction via its association with type I receptors such as growth hormone (GHR), prolactin (PRLR), leptin (LEPR), erythropoietin (EPOR), thrombopoietin (THPO); or type II receptors including IFN-alpha, IFN-beta, IFN-gamma and multiple interleukins. Following ligand-binding to cell surface receptors, phosphorylates specific tyrosine residues on the cytoplasmic tails of the receptor, creating docking sites for STATs proteins. Subsequently, phosphorylates the STATs proteins once they are recruited to the receptor. Phosphorylated STATs then form homodimer or heterodimers and translocate to the nucleus to activate gene transcription. For example, cell stimulation with erythropoietin (EPO) during erythropoiesis leads to JAK2 autophosphorylation, activation, and its association with erythropoietin receptor (EPOR) that becomes phosphorylated in its cytoplasmic domain. Then, STAT5 (STAT5A or STAT5B) is recruited, phosphorylated and activated by JAK2. Once activated, dimerized STAT5 translocates into the nucleus and promotes the transcription of several essential genes involved in the modulation of erythropoiesis. Part of a signaling cascade that is activated by increased cellular retinol and that leads to the activation of STAT5 (STAT5A or STAT5B). In addition, JAK2 mediates angiotensin-2-induced ARHGEF1 phosphorylation. Plays a role in cell cycle by phosphorylating CDKN1B. Cooperates with TEC through reciprocal phosphorylation to mediate cytokine-driven activation of FOS transcription. In the nucleus, plays a key role in chromatin by specifically mediating phosphorylation of 'Tyr-41' of histone H3 (H3Y41ph), a specific tag that promotes exclusion of CBX5 (HP1 alpha) from chromatin. Up-regulates the potassium voltage-gated channel activity of KCNA3. The sequence is that of Tyrosine-protein kinase JAK2 from Rattus norvegicus (Rat).